Here is a 1171-residue protein sequence, read N- to C-terminus: ATP-dependent helicase/deoxyribonuclease subunit B (1171 aa).

Belongs to the helicase family. AddB/RexB type 2 subfamily. In terms of assembly, heterodimer of AddA and RexB. Requires Mg(2+) as cofactor.

The heterodimer acts as both an ATP-dependent DNA helicase and an ATP-dependent, dual-direction single-stranded exonuclease. Recognizes the chi site generating a DNA molecule suitable for the initiation of homologous recombination. This subunit has 5' -&gt; 3' nuclease activity but not helicase activity. The polypeptide is ATP-dependent helicase/deoxyribonuclease subunit B (Leuconostoc citreum (strain KM20)).